Reading from the N-terminus, the 217-residue chain is ATP-dependent Clp protease proteolytic subunit (217 aa).

Ser-121 serves as the catalytic Nucleophile. His-146 is an active-site residue.

It belongs to the peptidase S14 family. In terms of assembly, fourteen ClpP subunits assemble into 2 heptameric rings which stack back to back to give a disk-like structure with a central cavity, resembling the structure of eukaryotic proteasomes.

The protein localises to the cytoplasm. The catalysed reaction is Hydrolysis of proteins to small peptides in the presence of ATP and magnesium. alpha-casein is the usual test substrate. In the absence of ATP, only oligopeptides shorter than five residues are hydrolyzed (such as succinyl-Leu-Tyr-|-NHMec, and Leu-Tyr-Leu-|-Tyr-Trp, in which cleavage of the -Tyr-|-Leu- and -Tyr-|-Trp bonds also occurs).. Its function is as follows. Cleaves peptides in various proteins in a process that requires ATP hydrolysis. Has a chymotrypsin-like activity. Plays a major role in the degradation of misfolded proteins. The protein is ATP-dependent Clp protease proteolytic subunit of Burkholderia mallei (strain NCTC 10247).